Here is a 562-residue protein sequence, read N- to C-terminus: Apical membrane antigen 1 (562 aa).

The first 21 residues, 1 to 21, serve as a signal peptide directing secretion; that stretch reads MNKIYCILFLSAQCLVHMGKC. Topologically, residues 22-484 are extracellular; it reads EPNQKPSRLT…QYAQGESKNQ (463 aa). N-linked (GlcNAc...) asparagine glycosylation is found at N84 and N176. 8 disulfides stabilise this stretch: C94–C247, C162–C192, C208–C220, C265–C363, C282–C354, C388–C444, C432–C449, and C434–C451. N-linked (GlcNAc...) asparagine glycosylation is present at N226. N405 and N441 each carry an N-linked (GlcNAc...) asparagine glycan. The chain crosses the membrane as a helical span at residues 485–507; sequence MLLIIIGITGGVCVVALASMFYF. The Cytoplasmic portion of the chain corresponds to 508–562; sequence RKKAHNDKYDKMEQADGYGKPTTRKDEMLDPEASFWGEEKRASHTTPVLMEKPYY. Residues 519–543 form a disordered region; sequence MEQADGYGKPTTRKDEMLDPEASFW.

The protein belongs to the apicomplexan parasites AMA1 family.

It localises to the membrane. Functionally, involved in parasite invasion of erythrocytes. This Plasmodium fragile protein is Apical membrane antigen 1 (AMA-1).